Here is a 629-residue protein sequence, read N- to C-terminus: tRNA uridine 5-carboxymethylaminomethyl modification enzyme MnmG (629 aa).

Residues 13–18 (GGGHAG), Val-125, and Ser-180 contribute to the FAD site. Residue 273 to 287 (GPRYCPSIEDKIHRF) participates in NAD(+) binding. Gln-370 is a binding site for FAD.

The protein belongs to the MnmG family. As to quaternary structure, homodimer. Heterotetramer of two MnmE and two MnmG subunits. Requires FAD as cofactor.

It localises to the cytoplasm. Functionally, NAD-binding protein involved in the addition of a carboxymethylaminomethyl (cmnm) group at the wobble position (U34) of certain tRNAs, forming tRNA-cmnm(5)s(2)U34. This Shewanella sp. (strain ANA-3) protein is tRNA uridine 5-carboxymethylaminomethyl modification enzyme MnmG.